Consider the following 239-residue polypeptide: Lectin (239 aa).

N-linked (GlcNAc...) asparagine glycosylation is found at Asn17 and Asn113.

The protein belongs to the leguminous lectin family. As to quaternary structure, homodimer.

Galactose and N-acetyllactosamine specific lectin. The chain is Lectin from Erythrina crista-galli (Cockspur coral tree).